Consider the following 1356-residue polypeptide: Partitioning defective 3 homolog (1356 aa).

At Ser-25 the chain carries Phosphoserine. Disordered regions lie at residues 81–100 and 154–262; these read EQDP…GTQS and SVSD…GLEH. The residue at position 91 (Thr-91) is a Phosphothreonine. The segment covering 91 to 100 has biased composition (low complexity); that stretch reads TSASSTGTQS. 2 stretches are compositionally biased toward polar residues: residues 154 to 163 and 171 to 187; these read SVSDSNFSSE and TRWS…TAGS. Phosphoserine is present on residues Ser-156 and Ser-174. The span at 190–203 shows a compositional bias: basic and acidic residues; that stretch reads TCDRKKDENYRSLP. Polar residues predominate over residues 204-224; the sequence is RDTSNWSNQFQRDNARSSLSA. Over residues 246–260 the composition is skewed to basic and acidic residues; that stretch reads DNSRVEPVGHADTGL. The PDZ 1 domain occupies 271–359; sequence MVKLVEVPND…TPIIWFHVVP (89 aa). A Phosphoserine modification is found at Ser-383. The disordered stretch occupies residues 408 to 448; the sequence is LNHPPEQIDSHSRLPHSAHPSGKPPSAPASAPQNVFSTTVS. 2 PDZ domains span residues 461 to 546 and 590 to 677; these read NIQL…LVFR and EVPL…GMIQ. Tyr-489 carries the post-translational modification Phosphotyrosine. Residues Ser-692, Ser-695, Ser-715, Ser-728, Ala-792, Ser-809, and Ser-827 each carry the phosphoserine modification. An interaction with PRKCI and PRKCZ region spans residues 712–936; it reads RRISHSLYSG…AAIDKSYDKP (225 aa). An N6-acetyllysine modification is found at Lys-834. Ser-837 bears the Phosphoserine mark. An N6-acetyllysine modification is found at Lys-851. Residues Ser-852 and Ser-873 each carry the phosphoserine modification. 2 disordered regions span residues 865–886 and 932–1025; these read TVDD…GLKK and SYDK…DMFR. N6-acetyllysine is present on Lys-885. Residues 935–1356 are interaction with FRMD4A; the sequence is KPAVDDDDEG…TPEKGRPFYS (422 aa). Residues 939–953 are compositionally biased toward acidic residues; that stretch reads DDDDEGMETLEEDTE. Ser-962 bears the Phosphoserine; by AURKA mark. Polar residues predominate over residues 968-982; the sequence is DQPSHSLERQMNGNQ. Phosphoserine is present on residues Ser-971 and Ser-973. The segment covering 983–1009 has biased composition (basic and acidic residues); the sequence is EKGDKTDRKKDKTGKEKKKDRDKEKDK. The residue at position 1046 (Ser-1046) is a Phosphoserine. Residues 1049–1077 are a coiled coil; that stretch reads SEEERIRMKQEQERIQAKTREFRERQARE. The tract at residues 1129–1356 is disordered; the sequence is QVKKPRNSKP…TPEKGRPFYS (228 aa). Over residues 1136–1149 the composition is skewed to polar residues; sequence SKPSPVDSNRSTPS. The span at 1150-1177 shows a compositional bias: basic and acidic residues; that stretch reads NHDRIQRLRQEFQQAKQDEDVEDRRRTY. Coiled-coil stretches lie at residues 1151–1174, 1201–1224, and 1280–1301; these read HDRI…EDRR, VQMQ…YSSL, and MLET…MKKQ. A compositionally biased stretch (low complexity) spans 1196–1205; that stretch reads SVSVEVQMQR. Positions 1221 to 1245 are enriched in polar residues; it reads YSSLPRQSRKNASSVSQDSWEQNYS. Residues 1285-1298 show a composition bias toward basic and acidic residues; the sequence is ELLRQEQRRKEQQM. Positions 1337-1346 are enriched in polar residues; sequence SQVARLNRLQ. The span at 1347–1356 shows a compositional bias: basic and acidic residues; that stretch reads TPEKGRPFYS. Lys-1350 is modified (N6-acetyllysine).

The protein belongs to the PAR3 family. Interacts (via PDZ 1 domain) with F11R/JAM1, PARD6A and PARD6B. Interacts with PRCKI and CDH5. Interacts (via PDZ 3 domain) with PTEN (via C-terminus). Part of a complex with PARD6A or PARD6B, PRKCI or PRKCZ and CDC42 or RAC1. Component of a complex whose core is composed of ARHGAP17, AMOT, PALS1, PATJ and PARD3/PAR3. Interacts with LIMK2, AURKA and AURKB. Component of the Par polarity complex, composed of at least phosphorylated PRKCZ, PARD3 and TIAM1. Directly interacts with TIAM1 and TIAM2. Interacts with ECT2, FBF1 and SIRT2. Interacts (via coiled-coil domain) with FRMD4A. Found in a complex with PARD3, CYTH1 and FRMD4A. Interacts with SAPCD2. Interacts with PRKCA. In terms of assembly, interacts with PRKCZ. Acetylated. Deacetylated by SIRT2, thereby inhibiting Schwann cell peripheral myelination. In terms of processing, phosphorylation at Ser-827 by PRKCZ and PRKCI occurs at the most apical tip of epithelial cell-cell contacts during the initial phase of tight junction formation and may promote dissociation of the complex with PARD6. EGF-induced Tyr-1127 phosphorylation mediates dissociation from LIMK2. Phosphorylation by AURKA at Ser-962 is required for the normal establishment of neuronal polarity. As to expression, widely expressed.

The protein resides in the cytoplasm. It is found in the endomembrane system. Its subcellular location is the cell junction. It localises to the tight junction. The protein localises to the adherens junction. The protein resides in the cell membrane. It is found in the cell cortex. Its subcellular location is the cytoskeleton. Functionally, adapter protein involved in asymmetrical cell division and cell polarization processes. Seems to play a central role in the formation of epithelial tight junctions. Targets the phosphatase PTEN to cell junctions. Involved in Schwann cell peripheral myelination. Association with PARD6B may prevent the interaction of PARD3 with F11R/JAM1, thereby preventing tight junction assembly. The PARD6-PARD3 complex links GTP-bound Rho small GTPases to atypical protein kinase C proteins. Required for establishment of neuronal polarity and normal axon formation in cultured hippocampal neurons. This chain is Partitioning defective 3 homolog, found in Homo sapiens (Human).